Consider the following 222-residue polypeptide: MSAKWINSIFKSVVLTAALALPFTASAFTEGTDYMVLEKPIPDADKTLIKVFSYACPFCYKYDKAVTGPVADKVADLVTFVPFHLETKGEYGKQASELFAVTMAKDKAAGVSLFDEKSQFKKAKFAWYAAYHDKKERWSDGKDPAAFLKTGLDAAGMSQAEFEAALKEPAVQQTLQKWKAAYEVAKIQGVPAYVVNGKYLIYTKNIKSIDSMAQLVRELATK.

Positions 1-27 (MSAKWINSIFKSVVLTAALALPFTASA) are cleaved as a signal peptide. Residues 28–221 (FTEGTDYMVL…MAQLVRELAT (194 aa)) form the Thioredoxin domain. The cysteines at positions 56 and 59 are disulfide-linked.

Belongs to the thioredoxin family. DsbL subfamily. Interacts with DsbI.

It is found in the periplasm. Its function is as follows. Involved in disulfide-bond formation. Acts by transferring its disulfide bond to other proteins. Part of a redox system composed of DsbI and DsbL that mediates formation of an essential disulfide bond in AssT. The protein is Thiol:disulfide interchange protein DsbL of Lelliottia amnigena (Enterobacter amnigenus).